Reading from the N-terminus, the 344-residue chain is Dihydroorotate dehydrogenase (quinone) (344 aa).

FMN contacts are provided by residues 61 to 65 and threonine 85; that span reads AGLDK. Lysine 65 is a binding site for substrate. 110–114 provides a ligand contact to substrate; it reads NRMGF. Residues asparagine 138 and asparagine 171 each contribute to the FMN site. Asparagine 171 is a binding site for substrate. Residue serine 174 is the Nucleophile of the active site. Asparagine 176 contacts substrate. FMN contacts are provided by lysine 216 and threonine 244. 245 to 246 provides a ligand contact to substrate; it reads NT. FMN contacts are provided by residues glycine 267, glycine 296, and 317–318; that span reads YS.

The protein belongs to the dihydroorotate dehydrogenase family. Type 2 subfamily. As to quaternary structure, monomer. Requires FMN as cofactor.

It is found in the cell membrane. The enzyme catalyses (S)-dihydroorotate + a quinone = orotate + a quinol. Its pathway is pyrimidine metabolism; UMP biosynthesis via de novo pathway; orotate from (S)-dihydroorotate (quinone route): step 1/1. Functionally, catalyzes the conversion of dihydroorotate to orotate with quinone as electron acceptor. The chain is Dihydroorotate dehydrogenase (quinone) from Psychrobacter sp. (strain PRwf-1).